The following is a 722-amino-acid chain: Pesticidal crystal protein Cry22Aa (722 aa).

Functionally, promotes colloidosmotic lysis by binding to the midgut epithelial cells of hymenopteran species. The polypeptide is Pesticidal crystal protein Cry22Aa (cry22Aa) (Bacillus thuringiensis).